The primary structure comprises 283 residues: Pantothenate synthetase (283 aa).

Residue 30–37 coordinates ATP; that stretch reads MGNLHDGH. The Proton donor role is filled by histidine 37. Residue glutamine 61 coordinates (R)-pantoate. Residue glutamine 61 participates in beta-alanine binding. 149–152 serves as a coordination point for ATP; sequence GEKD. Residue glutamine 155 coordinates (R)-pantoate. 186-189 contacts ATP; sequence LSSR.

Belongs to the pantothenate synthetase family. In terms of assembly, homodimer.

Its subcellular location is the cytoplasm. It catalyses the reaction (R)-pantoate + beta-alanine + ATP = (R)-pantothenate + AMP + diphosphate + H(+). It functions in the pathway cofactor biosynthesis; (R)-pantothenate biosynthesis; (R)-pantothenate from (R)-pantoate and beta-alanine: step 1/1. In terms of biological role, catalyzes the condensation of pantoate with beta-alanine in an ATP-dependent reaction via a pantoyl-adenylate intermediate. The sequence is that of Pantothenate synthetase from Escherichia fergusonii (strain ATCC 35469 / DSM 13698 / CCUG 18766 / IAM 14443 / JCM 21226 / LMG 7866 / NBRC 102419 / NCTC 12128 / CDC 0568-73).